We begin with the raw amino-acid sequence, 242 residues long: Octanoyltransferase (242 aa).

Residues 31–206 (SQTTDEIWFL…LFLKNFGYNQ (176 aa)) enclose the BPL/LPL catalytic domain. Residues 70–77 (RGGQVTYH), 137–139 (SIG), and 150–152 (GLA) each bind substrate. Cys-168 serves as the catalytic Acyl-thioester intermediate.

This sequence belongs to the LipB family.

The protein localises to the cytoplasm. The catalysed reaction is octanoyl-[ACP] + L-lysyl-[protein] = N(6)-octanoyl-L-lysyl-[protein] + holo-[ACP] + H(+). It functions in the pathway protein modification; protein lipoylation via endogenous pathway; protein N(6)-(lipoyl)lysine from octanoyl-[acyl-carrier-protein]: step 1/2. Its function is as follows. Catalyzes the transfer of endogenously produced octanoic acid from octanoyl-acyl-carrier-protein onto the lipoyl domains of lipoate-dependent enzymes. Lipoyl-ACP can also act as a substrate although octanoyl-ACP is likely to be the physiological substrate. This chain is Octanoyltransferase, found in Coxiella burnetii (strain CbuG_Q212) (Coxiella burnetii (strain Q212)).